A 282-amino-acid chain; its full sequence is Acetyl-coenzyme A carboxylase carboxyl transferase subunit beta (282 aa).

Residues 25-282 (LWTKCVSCGE…SSILTMLYRP (258 aa)) form the CoA carboxyltransferase N-terminal domain. Cys-29, Cys-32, Cys-48, and Cys-51 together coordinate Zn(2+). The C4-type zinc finger occupies 29–51 (CVSCGETIYTKDIENNLNVCPKC).

It belongs to the AccD/PCCB family. As to quaternary structure, acetyl-CoA carboxylase is a heterohexamer composed of biotin carboxyl carrier protein (AccB), biotin carboxylase (AccC) and two subunits each of ACCase subunit alpha (AccA) and ACCase subunit beta (AccD). Requires Zn(2+) as cofactor.

The protein localises to the cytoplasm. It carries out the reaction N(6)-carboxybiotinyl-L-lysyl-[protein] + acetyl-CoA = N(6)-biotinyl-L-lysyl-[protein] + malonyl-CoA. Its pathway is lipid metabolism; malonyl-CoA biosynthesis; malonyl-CoA from acetyl-CoA: step 1/1. Its function is as follows. Component of the acetyl coenzyme A carboxylase (ACC) complex. Biotin carboxylase (BC) catalyzes the carboxylation of biotin on its carrier protein (BCCP) and then the CO(2) group is transferred by the transcarboxylase to acetyl-CoA to form malonyl-CoA. The sequence is that of Acetyl-coenzyme A carboxylase carboxyl transferase subunit beta from Citrifermentans bemidjiense (strain ATCC BAA-1014 / DSM 16622 / JCM 12645 / Bem) (Geobacter bemidjiensis).